The primary structure comprises 151 residues: Ribosomal RNA large subunit methyltransferase H (151 aa).

S-adenosyl-L-methionine contacts are provided by residues L73, G100, and 119-124; that span reads LSKMTM.

This sequence belongs to the RNA methyltransferase RlmH family. In terms of assembly, homodimer.

The protein resides in the cytoplasm. It carries out the reaction pseudouridine(1915) in 23S rRNA + S-adenosyl-L-methionine = N(3)-methylpseudouridine(1915) in 23S rRNA + S-adenosyl-L-homocysteine + H(+). Functionally, specifically methylates the pseudouridine at position 1915 (m3Psi1915) in 23S rRNA. This is Ribosomal RNA large subunit methyltransferase H from Campylobacter concisus (strain 13826).